The sequence spans 122 residues: MIQSQTHLNVADNSGARELMCIRIIGTSNRRYAHIGDIIIAVIKEAVPNSPLERSEVIRAVIVRTSKELKRDNGMIIRYDDNAAVVIDQEGNPKGTRIFGAIARELRQLNFTKIVSLAPEVL.

This sequence belongs to the universal ribosomal protein uL14 family. In terms of assembly, part of the 50S ribosomal subunit.

It localises to the plastid. Its subcellular location is the chloroplast. Functionally, binds to 23S rRNA. In Populus trichocarpa (Western balsam poplar), this protein is Large ribosomal subunit protein uL14c.